The sequence spans 162 residues: Caveolin-2 (162 aa).

The Cytoplasmic segment spans residues 1–86; the sequence is MGLETEKTDV…FEISKYVMYK (86 aa). A Phosphotyrosine; by SRC modification is found at Tyr19. Ser20 and Ser23 each carry phosphoserine. Tyr27 is subject to Phosphotyrosine; by SRC. The residue at position 36 (Ser36) is a Phosphoserine. Positions 87 to 107 form an intramembrane region, helical; that stretch reads FLTVFLAIPLAFLAGILFATL. Residues 108–162 lie on the Cytoplasmic side of the membrane; it reads SCLHIWIIMPFVKTCLMVLPSVQTIWKSVTDAIVAPLCTSIGRSFSSVSLQLSQD.

Belongs to the caveolin family. Monomer or homodimer. Interacts with CAV1; the interaction forms a stable heterooligomeric complex that is required for targeting to lipid rafts and for caveolae formation. Tyrosine phosphorylated forms do not form heterooligomers with the Tyr-19-phosphorylated form existing as a monomer or dimer, and the Tyr-27-form as a monomer only. Interacts (tyrosine phosphorylated form) with the SH2 domain-containing proteins, RASA1, NCK1 and SRC. Interacts (tyrosine phosphorylated form) with INSR, the interaction (Tyr-27-phosphorylated form) is increased on insulin stimulation. Interacts (Tyr-19 phosphorylated form) with MAPK1 (phosphorylated form); the interaction, promoted by insulin, leads to nuclear location and MAPK1 activation. Interacts with STAT3; the interaction is increased on insulin-induced tyrosine phosphorylation leading to STAT activation. In terms of processing, phosphorylated on serine and tyrosine residues. CAV1 promotes phosphorylation on Ser-23 which then targets the complex to the plasma membrane, lipid rafts and caveolae. Phosphorylation on Ser-36 appears to modulate mitosis in endothelial cells. Phosphorylation on both Tyr-19 and Tyr-27 is required for insulin-induced 'Ser-727' phosphorylation of STAT3 and its activation. Phosphorylation on Tyr-19 is required for insulin-induced phosphorylation of MAPK1 and DNA binding of STAT3. Tyrosine phosphorylation is induced by both EGF and insulin (By. similarity).

It localises to the nucleus. The protein resides in the cytoplasm. It is found in the golgi apparatus membrane. The protein localises to the cell membrane. Its subcellular location is the membrane. It localises to the caveola. In terms of biological role, may act as a scaffolding protein within caveolar membranes. Interacts directly with G-protein alpha subunits and can functionally regulate their activity. Acts as an accessory protein in conjunction with CAV1 in targeting to lipid rafts and driving caveolae formation. The Ser-36 phosphorylated form has a role in modulating mitosis in endothelial cells. Positive regulator of cellular mitogenesis of the MAPK signaling pathway. Required for the insulin-stimulated nuclear translocation and activation of MAPK1 and STAT3, and the subsequent regulation of cell cycle progression. This chain is Caveolin-2 (CAV2), found in Aotus nancymaae (Ma's night monkey).